The sequence spans 35 residues: UPF0387 membrane protein YohO (35 aa).

A helical membrane pass occupies residues 6-26 (IGVIALFLFMAFGGIGGVMLA).

It belongs to the UPF0387 family.

It localises to the cell inner membrane. This chain is UPF0387 membrane protein YohO, found in Escherichia coli O8 (strain IAI1).